A 200-amino-acid chain; its full sequence is 3-isopropylmalate dehydratase small subunit (200 aa).

It belongs to the LeuD family. LeuD type 1 subfamily. Heterodimer of LeuC and LeuD.

The catalysed reaction is (2R,3S)-3-isopropylmalate = (2S)-2-isopropylmalate. It participates in amino-acid biosynthesis; L-leucine biosynthesis; L-leucine from 3-methyl-2-oxobutanoate: step 2/4. Catalyzes the isomerization between 2-isopropylmalate and 3-isopropylmalate, via the formation of 2-isopropylmaleate. The sequence is that of 3-isopropylmalate dehydratase small subunit from Methylobacterium radiotolerans (strain ATCC 27329 / DSM 1819 / JCM 2831 / NBRC 15690 / NCIMB 10815 / 0-1).